We begin with the raw amino-acid sequence, 226 residues long: Gap junction beta-2 protein (226 aa).

Residues 1–20 are Cytoplasmic-facing; it reads MDWGGLHTILGGVNKHSTSI. The chain crosses the membrane as a helical span at residues 21–40; sequence GKIWLTVLFIFRIMILVVAA. Topologically, residues 41–75 are extracellular; that stretch reads KEVWGDEQADFVCNTLQPGCKNVCYDHYFPISHIR. Disulfide bonds link C53–C180, C60–C174, and C64–C169. Residues 76–98 traverse the membrane as a helical segment; that stretch reads LWALQLIFVSTPALLVAMHVAYY. The Cytoplasmic portion of the chain corresponds to 99–131; the sequence is RHEKKRKFIRGEIKTEFKDIEEIKKQKVRIEGS. The chain crosses the membrane as a helical span at residues 132 to 154; that stretch reads LWWTYTGSIFFRVIFEAAFMYVF. At 155–192 the chain is on the extracellular side; that stretch reads YVMYDGFAMQRLVKCNAWPCPNTVDCFVSRPTEKTVFT. A helical transmembrane segment spans residues 193 to 215; sequence VFMIAVSGICILLNVTELCYLLI. At 216 to 226 the chain is on the cytoplasmic side; sequence RFCSGKSKKPV.

Belongs to the connexin family. In terms of assembly, a connexon is composed of a hexamer of connexins. Interacts with CNST.

Its subcellular location is the cell membrane. It localises to the cell junction. The protein localises to the gap junction. In terms of biological role, one gap junction consists of a cluster of closely packed pairs of transmembrane channels, the connexons, through which materials of low MW diffuse from one cell to a neighboring cell. The chain is Gap junction beta-2 protein (GJB2) from Bos taurus (Bovine).